A 382-amino-acid polypeptide reads, in one-letter code: Na(+)/H(+) antiporter NhaA (382 aa).

10 helical membrane-spanning segments follow: residues 11–31, 47–67, 88–108, 116–136, 145–165, 170–190, 261–283, 299–319, 327–347, and 353–373; these read FSVP…LDPA, FHFV…AVEI, LATL…NAII, GWGI…RLVF, FLLL…AVFY, HPTE…AYIL, IVVD…SSVG, LGIF…PQQV, TGLV…VAFV, and GSAK…IMLG.

The protein belongs to the NhaA Na(+)/H(+) (TC 2.A.33) antiporter family.

Its subcellular location is the cell inner membrane. The enzyme catalyses Na(+)(in) + 2 H(+)(out) = Na(+)(out) + 2 H(+)(in). Functionally, na(+)/H(+) antiporter that extrudes sodium in exchange for external protons. The polypeptide is Na(+)/H(+) antiporter NhaA (Geobacter sulfurreducens (strain ATCC 51573 / DSM 12127 / PCA)).